A 95-amino-acid polypeptide reads, in one-letter code: Small ribosomal subunit protein bS20 (95 aa).

Belongs to the bacterial ribosomal protein bS20 family.

Functionally, binds directly to 16S ribosomal RNA. The polypeptide is Small ribosomal subunit protein bS20 (Ehrlichia chaffeensis (strain ATCC CRL-10679 / Arkansas)).